Consider the following 136-residue polypeptide: Cytochrome c oxidase subunit 13, mitochondrial (136 aa).

A mitochondrion-targeting transit peptide spans 1–29; that stretch reads MFAQRQMFFARLAANLRAPAVRQTVQRRF. The Mitochondrial matrix portion of the chain corresponds to 30–62; that stretch reads ASTPANESGKNAFVREREAVKQHAAETTELWRK. Residues 63–83 traverse the membrane as a helical segment; it reads ISLYGIPPALALAGYNAYTLY. Topologically, residues 84–136 are mitochondrial intermembrane; that stretch reads NEHWEHWSHLPPLEERTEYPYQNIRTRNYPWGDGDKTLFWNESVNYHNRDKVT.

This sequence belongs to the cytochrome c oxidase subunit 6A family. As to quaternary structure, component of the cytochrome c oxidase (complex IV, CIV), a multisubunit enzyme composed of 11 subunits. The complex is composed of a catalytic core of 3 subunits Cox1, Cox2 and Cox3, encoded in the mitochondrial DNA, and 8 supernumerary subunits Cox4, Cox5a/Cox5, Cox6, Cox7, Cox8, Cox7a/Cox9, Cox6b/Cox12 and Cox6a/Cox13, which are encoded in the nuclear genome. The complex exists as a monomer or a dimer and forms respiratory supercomplexes (SCs) in the inner mitochondrial membrane with NADH-ubiquinone oxidoreductase (complex I, CI) and ubiquinol-cytochrome c oxidoreductase (cytochrome b-c1 complex, complex III, CIII), resulting in various different assemblies (supercomplexes I(1)IV(1), I(1)III(3)IV(2), III(2)IV(1) and III(2)IV(2) as well as larger supercomplexes of compositions like I(1)III(2)IV(5-6)). Cox6a/Cox13 was not present in the cryo-EM structure. It may be involved in complex IV dimer formation and might not be always expressed. This would explain its absence in the map of the isolated monomer.

It localises to the mitochondrion inner membrane. It functions in the pathway energy metabolism; oxidative phosphorylation. Functionally, component of the cytochrome c oxidase, the last enzyme in the mitochondrial electron transport chain which drives oxidative phosphorylation. The respiratory chain contains 3 multisubunit complexes succinate dehydrogenase (complex II, CII), ubiquinol-cytochrome c oxidoreductase (cytochrome b-c1 complex, complex III, CIII) and cytochrome c oxidase (complex IV, CIV), that cooperate to transfer electrons derived from NADH and succinate to molecular oxygen, creating an electrochemical gradient over the inner membrane that drives transmembrane transport and the ATP synthase. Cytochrome c oxidase is the component of the respiratory chain that catalyzes the reduction of oxygen to water. Electrons originating from reduced cytochrome c in the intermembrane space (IMS) are transferred via the dinuclear copper A center (CU(A)) of Cox2 and heme A of Cox1 to the active site in Cox1, a binuclear center (BNC) formed by heme A3 and copper B (CU(B)). The BNC reduces molecular oxygen to 2 water molecules using 4 electrons from cytochrome c in the IMS and 4 protons from the mitochondrial matrix. In Neurospora crassa (strain ATCC 24698 / 74-OR23-1A / CBS 708.71 / DSM 1257 / FGSC 987), this protein is Cytochrome c oxidase subunit 13, mitochondrial (eat-5).